The sequence spans 411 residues: Serine/threonine transporter SstT (411 aa).

9 helical membrane passes run 14 to 34, 43 to 63, 82 to 102, 141 to 161, 192 to 212, 218 to 238, 290 to 310, 330 to 350, and 357 to 377; these read GSLV…ASVA, FLGG…VFIL, IIML…VMSF, ALMS…GFAL, IGIF…ALAG, AVLL…IVFF, IPLG…VLTL, VVAA…LLLI, and FGIP…IGVI.

This sequence belongs to the dicarboxylate/amino acid:cation symporter (DAACS) (TC 2.A.23) family.

It is found in the cell inner membrane. The catalysed reaction is L-serine(in) + Na(+)(in) = L-serine(out) + Na(+)(out). It catalyses the reaction L-threonine(in) + Na(+)(in) = L-threonine(out) + Na(+)(out). Functionally, involved in the import of serine and threonine into the cell, with the concomitant import of sodium (symport system). The protein is Serine/threonine transporter SstT of Photobacterium profundum (strain SS9).